Here is a 300-residue protein sequence, read N- to C-terminus: Diphthine methyl ester synthase (300 aa).

S-adenosyl-L-methionine-binding positions include Leu-9, Asp-85, Gly-88, Ser-113–Val-114, and Leu-164. Phosphoserine is present on Ser-172. Leu-222 and His-247 together coordinate S-adenosyl-L-methionine. Ser-298 carries the post-translational modification Phosphoserine.

It belongs to the diphthine synthase family.

The protein resides in the cytoplasm. It carries out the reaction 2-[(3S)-amino-3-carboxypropyl]-L-histidyl-[translation elongation factor 2] + 4 S-adenosyl-L-methionine = diphthine methyl ester-[translation elongation factor 2] + 4 S-adenosyl-L-homocysteine + 3 H(+). It participates in protein modification; peptidyl-diphthamide biosynthesis. In terms of biological role, S-adenosyl-L-methionine-dependent methyltransferase that catalyzes four methylations of the modified target histidine residue in translation elongation factor 2 (EF-2), to form an intermediate called diphthine methyl ester. The four successive methylation reactions represent the second step of diphthamide biosynthesis. This is Diphthine methyl ester synthase (DPH5) from Saccharomyces cerevisiae (strain ATCC 204508 / S288c) (Baker's yeast).